The primary structure comprises 168 residues: MKPNDKVIIGRLARPYGLRGWIKVVSFTHPIDNLLNHPTWQIQHNNEWQPLKLQAGKLHEPFLVVKLENIDDPETAKHYTNDLIAIERRALGALKEGDYYWTDLIGLAVVNTHGIELGTVDSLIETGSNDVLVVRSKERERLIPYTSYTIQSIDLEKKIIVVEWDADF.

The 73-residue stretch at 96–168 folds into the PRC barrel domain; that stretch reads EGDYYWTDLI…IIVVEWDADF (73 aa).

It belongs to the RimM family. As to quaternary structure, binds ribosomal protein uS19.

The protein localises to the cytoplasm. Functionally, an accessory protein needed during the final step in the assembly of 30S ribosomal subunit, possibly for assembly of the head region. Essential for efficient processing of 16S rRNA. May be needed both before and after RbfA during the maturation of 16S rRNA. It has affinity for free ribosomal 30S subunits but not for 70S ribosomes. The sequence is that of Ribosome maturation factor RimM from Coxiella burnetii (strain RSA 331 / Henzerling II).